Reading from the N-terminus, the 163-residue chain is EF-hand calcium-binding domain-containing protein 11 (163 aa).

EF-hand domains are found at residues 18–53 (SEHRKWVEVFKACDEDHKGYLSREDFKTAVVMLFGY), 91–126 (RYRNEVRHIFTAFDTYYRGFLTLEDFKKAFRQVAPK), and 127–162 (LPERTVLEVFREVDRDSDGHVSFRDFEYALNYGQKE). Ca(2+) is bound by residues Asp-140, Asp-142, Asp-144, His-146, and Asp-151.

This Homo sapiens (Human) protein is EF-hand calcium-binding domain-containing protein 11 (EFCAB11).